A 465-amino-acid polypeptide reads, in one-letter code: Alpha-2A adrenergic receptor (465 aa).

Residues 1–48 (MFRQEQPLAEGSFAPMGSLQPDAGNSSWNGTEAPGGGTRATPYSLQVT) lie on the Extracellular side of the membrane. N-linked (GlcNAc...) asparagine glycans are attached at residues N25 and N29. The chain crosses the membrane as a helical span at residues 49-74 (LTLVCLAGLLMLFTVFGNVLVIIAVF). Over 75–85 (TSRALKAPQNL) the chain is Cytoplasmic. A helical membrane pass occupies residues 86-111 (FLVSLASADILVATLVIPFSLANEVM). Topologically, residues 112 to 121 (GYWYFGKVWC) are extracellular. C121 and C203 are oxidised to a cystine. The helical transmembrane segment at 122-144 (EIYLALDVLFCTSSIVHLCAISL) threads the bilayer. Over 145 to 164 (DRYWSITQAIEYNLKRTPRR) the chain is Cytoplasmic. A helical transmembrane segment spans residues 165–188 (IKAIIVTVWVISAVISFPPLISIE). The Extracellular segment spans residues 189-207 (KKGAGGGQQPAEPSCKIND). A helical membrane pass occupies residues 208–232 (QKWYVISSSIGSFFAPCLIMILVYV). The Cytoplasmic portion of the chain corresponds to 233–389 (RIYQIAKRRT…RQNREKRFTF (157 aa)). Residues 242–378 (TRVPPSRRGP…GGGAKASRWR (137 aa)) are disordered. Over residues 313-330 (SSEHAERPPGPRRPDRGP) the composition is skewed to basic and acidic residues. At S346 the chain carries Phosphoserine. Residues 353-363 (GAAGPGASGSG) are compositionally biased toward gly residues. The residue at position 368 (R368) is an Omega-N-methylarginine. Residues 390–414 (VLAVVIGVFVVCWFPFFFTYTLIAV) form a helical membrane-spanning segment. The Extracellular segment spans residues 415-424 (GCPVPSQLFN). The chain crosses the membrane as a helical span at residues 425 to 445 (FFFWFGYCNSSLNPVIYTIFN). Topologically, residues 446–465 (HDFRRAFKKILCRGDRKRIV) are cytoplasmic. The S-palmitoyl cysteine moiety is linked to residue C457.

It belongs to the G-protein coupled receptor 1 family. Adrenergic receptor subfamily. ADRA2A sub-subfamily.

The protein resides in the cell membrane. In terms of biological role, alpha-2 adrenergic receptors mediate the catecholamine-induced inhibition of adenylate cyclase through the action of G proteins. This Mus musculus (Mouse) protein is Alpha-2A adrenergic receptor.